We begin with the raw amino-acid sequence, 820 residues long: Leucine--tRNA ligase (820 aa).

Positions 40–51 (PYPSGAGLHVGH) match the 'HIGH' region motif. Positions 601-605 (KMSKS) match the 'KMSKS' region motif. Lys604 is a binding site for ATP.

It belongs to the class-I aminoacyl-tRNA synthetase family.

It is found in the cytoplasm. It catalyses the reaction tRNA(Leu) + L-leucine + ATP = L-leucyl-tRNA(Leu) + AMP + diphosphate. This Chlamydia pneumoniae (Chlamydophila pneumoniae) protein is Leucine--tRNA ligase.